Reading from the N-terminus, the 100-residue chain is MASQSLIQREQKRKKLEQKYHLIRRSLKKEISKVTSLNEKWEIHGKLQSPPRNSAPTRLHRRCFLTGRPRANYRDFGLSGHILREMVHTCLLPGATRSSW.

This sequence belongs to the universal ribosomal protein uS14 family. As to quaternary structure, part of the 30S ribosomal subunit.

Its subcellular location is the plastid. It is found in the chloroplast. Its function is as follows. Binds 16S rRNA, required for the assembly of 30S particles. The sequence is that of Small ribosomal subunit protein uS14c from Fagopyrum esculentum subsp. ancestrale (Wild buckwheat).